Reading from the N-terminus, the 587-residue chain is Putative inactive receptor-like protein kinase At1g64210 (587 aa).

An N-terminal signal peptide occupies residues 1–19; the sequence is MQIFLFFFSLILCFVLISS. At 20 to 232 the chain is on the extracellular side; the sequence is QTLEDDKKAL…KTPFGLSQLA (213 aa). N37 and N44 each carry an N-linked (GlcNAc...) asparagine glycan. LRR repeat units lie at residues 89-112, 113-136, 137-160, 161-183, and 184-205; these read SLKF…TNLK, SLTH…SELK, NLKV…SGLT, SLQV…HLPK, and LSQI…LQRF. N-linked (GlcNAc...) asparagine glycosylation is found at N149, N169, N188, and N214. The chain crosses the membrane as a helical span at residues 233-253; sequence FLLILSAACVLCVSGLSFIMI. Over 254-587 the chain is Cytoplasmic; it reads TCFGKTRISG…IEDIRSVDAE (334 aa). The Protein kinase domain maps to 307 to 581; sequence SSSAEVLGKG…AQVLKLIEDI (275 aa). At S309 the chain carries Phosphoserine. Residues 313–321 and K335 contribute to the ATP site; that span reads LGKGAFGTT. Position 386 is a phosphoserine (S386). Residues T462, T463, T466, and T477 each carry the phosphothreonine modification.

The protein localises to the cell membrane. In Arabidopsis thaliana (Mouse-ear cress), this protein is Putative inactive receptor-like protein kinase At1g64210.